Reading from the N-terminus, the 282-residue chain is Glycine betaine transport system permease protein OpuAB (282 aa).

The Extracellular portion of the chain corresponds to 1-18 (MDRLPRIPLADIIDRFVD). A helical transmembrane segment spans residues 19–39 (WITMTFGGFFDGIANGLAAFV). Residues 40-44 (NGIVT) are Cytoplasmic-facing. The chain crosses the membrane as a helical span at residues 45–65 (GLGFIPSILLTIIFAALAWWI). The Extracellular portion of the chain corresponds to 66–69 (STRG). A helical transmembrane segment spans residues 70–90 (IALFTLIGFLLIDYLGYWDPM). One can recognise an ABC transmembrane type-1 domain in the interval 90–269 (MLQTLALVLT…IVAITLDRIT (180 aa)). Over 91-93 (LQT) the chain is Cytoplasmic. The chain crosses the membrane as a helical span at residues 94–114 (LALVLTSVIISIVVGVPIGIW). The Extracellular portion of the chain corresponds to 115–137 (ASQKETVRRIVTPILDLMQTMPA). Residues 138 to 158 (FVYLLPAIFFFNIGVVPGVVA) form a helical membrane-spanning segment. Residues 159–215 (SVIFAMPPTIRMTVLGIKQVPADLIEATEAFGSTTAQRLFKVQLPLATKTILAGINQ) are Cytoplasmic-facing. A helical transmembrane segment spans residues 216-236 (SIMLALSMVVIAAMVGAPGLG). At 237 to 242 (SEVYSA) the chain is on the extracellular side. The chain crosses the membrane as a helical span at residues 243–263 (VTQLKTGVGVEAGIAIVIVAI). The Cytoplasmic segment spans residues 264 to 282 (TLDRITQNIKVKKKSRGNA).

This sequence belongs to the binding-protein-dependent transport system permease family. CysTW subfamily. As to quaternary structure, the complex is composed of two ATP-binding proteins (OpuAA), two transmembrane proteins (OpuAB) and a solute-binding protein (OpuAC).

It is found in the cell membrane. Its function is as follows. Involved in a multicomponent binding-protein-dependent transport system for glycine betaine; probably responsible for the translocation of the substrate across the membrane. The polypeptide is Glycine betaine transport system permease protein OpuAB (opuAB) (Bacillus subtilis (strain 168)).